The primary structure comprises 328 residues: Malate dehydrogenase (328 aa).

Residue 11 to 17 (GAAGQIG) participates in NAD(+) binding. Residues Arg94 and Arg100 each contribute to the substrate site. NAD(+) contacts are provided by residues Asn107, Gln114, and 131–133 (VGN). Substrate contacts are provided by Asn133 and Arg164. The active-site Proton acceptor is His189.

It belongs to the LDH/MDH superfamily. MDH type 2 family.

It carries out the reaction (S)-malate + NAD(+) = oxaloacetate + NADH + H(+). In terms of biological role, catalyzes the reversible oxidation of malate to oxaloacetate. In Xanthomonas euvesicatoria pv. vesicatoria (strain 85-10) (Xanthomonas campestris pv. vesicatoria), this protein is Malate dehydrogenase.